The chain runs to 256 residues: tRNA (guanine-N(1)-)-methyltransferase (256 aa).

Residues glycine 117 and 137–142 contribute to the S-adenosyl-L-methionine site; that span reads LGDFVL.

Belongs to the RNA methyltransferase TrmD family. In terms of assembly, homodimer.

The protein resides in the cytoplasm. The catalysed reaction is guanosine(37) in tRNA + S-adenosyl-L-methionine = N(1)-methylguanosine(37) in tRNA + S-adenosyl-L-homocysteine + H(+). Specifically methylates guanosine-37 in various tRNAs. In Methylibium petroleiphilum (strain ATCC BAA-1232 / LMG 22953 / PM1), this protein is tRNA (guanine-N(1)-)-methyltransferase.